The following is a 78-amino-acid chain: Large ribosomal subunit protein bL28 (78 aa).

The protein belongs to the bacterial ribosomal protein bL28 family.

This is Large ribosomal subunit protein bL28 from Pasteurella multocida (strain Pm70).